A 352-amino-acid chain; its full sequence is MIEADRLIAATGPRDREEVQDRAIRPLSLADYIGQPTVREQMELFIQAARGRSESLDHTLIFGPPGLGKTTLANIIAQEMGVSIKSTSGPVLERPGDLAALLTNLEPHDVLFIDEIHRLSPIVEEVLYPAMEDFQLDIMIGEGPAARSIKLDLPPFTLVGATTRAGMLTNPLRDRFGIVQRLEFYSTADLATIVSRSAGILGLPLDPEGAFEIARRARGTPRIANRLLRRVRDFAEVRAKGHITKAVADLALNLLDVDEHGFDHQDRRLLLTMIEKFDGGPVGVDSLAAAISEERHTIEDVLEPYLIQQGYIMRTPRGRVVTRHAYLHFGLNIPSRLGEMPVVDEFLDAVDD.

Residues 4–185 (ADRLIAATGP…FGIVQRLEFY (182 aa)) form a large ATPase domain (RuvB-L) region. ATP is bound by residues I24, R25, G66, K69, T70, T71, 132-134 (EDF), R175, Y185, and R222. T70 provides a ligand contact to Mg(2+). The interval 186–256 (STADLATIVS…VADLALNLLD (71 aa)) is small ATPAse domain (RuvB-S). Residues 259–352 (EHGFDHQDRR…VDEFLDAVDD (94 aa)) form a head domain (RuvB-H) region. DNA-binding residues include R295, R314, and R319.

Belongs to the RuvB family. In terms of assembly, homohexamer. Forms an RuvA(8)-RuvB(12)-Holliday junction (HJ) complex. HJ DNA is sandwiched between 2 RuvA tetramers; dsDNA enters through RuvA and exits via RuvB. An RuvB hexamer assembles on each DNA strand where it exits the tetramer. Each RuvB hexamer is contacted by two RuvA subunits (via domain III) on 2 adjacent RuvB subunits; this complex drives branch migration. In the full resolvosome a probable DNA-RuvA(4)-RuvB(12)-RuvC(2) complex forms which resolves the HJ.

The protein resides in the cytoplasm. The enzyme catalyses ATP + H2O = ADP + phosphate + H(+). In terms of biological role, the RuvA-RuvB-RuvC complex processes Holliday junction (HJ) DNA during genetic recombination and DNA repair, while the RuvA-RuvB complex plays an important role in the rescue of blocked DNA replication forks via replication fork reversal (RFR). RuvA specifically binds to HJ cruciform DNA, conferring on it an open structure. The RuvB hexamer acts as an ATP-dependent pump, pulling dsDNA into and through the RuvAB complex. RuvB forms 2 homohexamers on either side of HJ DNA bound by 1 or 2 RuvA tetramers; 4 subunits per hexamer contact DNA at a time. Coordinated motions by a converter formed by DNA-disengaged RuvB subunits stimulates ATP hydrolysis and nucleotide exchange. Immobilization of the converter enables RuvB to convert the ATP-contained energy into a lever motion, pulling 2 nucleotides of DNA out of the RuvA tetramer per ATP hydrolyzed, thus driving DNA branch migration. The RuvB motors rotate together with the DNA substrate, which together with the progressing nucleotide cycle form the mechanistic basis for DNA recombination by continuous HJ branch migration. Branch migration allows RuvC to scan DNA until it finds its consensus sequence, where it cleaves and resolves cruciform DNA. The polypeptide is Holliday junction branch migration complex subunit RuvB (Pseudomonas fluorescens (strain SBW25)).